A 160-amino-acid polypeptide reads, in one-letter code: uncharacterized protein (160 aa).

The N-acetyltransferase domain maps to 9-151; the sequence is LLINYKTLEK…GENPLIWLPE (143 aa).

This is an uncharacterized protein from Oceanobacillus iheyensis (strain DSM 14371 / CIP 107618 / JCM 11309 / KCTC 3954 / HTE831).